The following is a 494-amino-acid chain: Integrin beta-like protein 1 (494 aa).

The first 23 residues, 1 to 23, serve as a signal peptide directing secretion; the sequence is MRPPGFRNFLLLASSLLFAGLSA. Intrachain disulfides connect Cys40–Cys71, Cys51–Cys69, Cys63–Cys74, Cys76–Cys89, Cys91–Cys112, Cys96–Cys110, Cys104–Cys115, Cys117–Cys126, Cys132–Cys159, Cys143–Cys157, Cys151–Cys162, Cys164–Cys178, Cys180–Cys202, Cys185–Cys200, Cys194–Cys205, Cys207–Cys216, Cys220–Cys247, Cys231–Cys245, Cys239–Cys250, Cys252–Cys269, Cys271–Cys296, Cys276–Cys294, Cys288–Cys299, Cys301–Cys310, Cys316–Cys343, Cys327–Cys341, Cys335–Cys346, Cys348–Cys361, Cys363–Cys384, Cys368–Cys382, Cys376–Cys387, Cys389–Cys398, Cys404–Cys431, Cys415–Cys429, Cys423–Cys434, Cys436–Cys448, Cys450–Cys471, Cys455–Cys469, Cys463–Cys474, and Cys476–Cys485. I-EGF domains are found at residues 40 to 90, 91 to 127, 132 to 179, 180 to 217, 220 to 270, 271 to 311, 316 to 362, 363 to 399, 404 to 449, and 450 to 486; these read CRLS…PLCE, CHEWVCETYDGSTCAGHGKCDCGKCKCDQGWYGDACQ, CDLT…KFCE, CDDRECIDDETEEICGGHGKCYCGNCYCKAGWHGDKCE, CDIT…DTCE, CDER…KKCE, CTLS…KTCE, CDDRRCEDLDGVVCGGHGTCSCGRCVCERGWFGKLCQ, CNMT…EFCD, and CDDRDCDKHDGLICTGNGICSCGNCECWDGWNGNACE. Residues 51–95 form an I repeat; the sequence is CRAPGQPPGAALCHGRGRCDCGVCICHVTEPGMFFGPLCECHEWV. The tract at residues 51-494 is cysteine-rich tandem repeats; it reads CRAPGQPPGA…CEIWLGSEYP (444 aa). One copy of the II repeat lies at 96-142; the sequence is CETYDGSTCAGHGKCDCGKCKCDQGWYGDACQYPTNCDLTKKKSNQM. The III repeat unit spans residues 143 to 184; sequence CKNSQDIICSNAGTCHCGRCKCDNSDGSGLVYGKFCECDDRE. Residues 185 to 230 form an IV repeat; the sequence is CIDDETEEICGGHGKCYCGNCYCKAGWHGDKCEFQCDITPWESKRR. One copy of the V repeat lies at 231-275; sequence CTSPDGKICSNRGTCVCGECTCHDVDPTGDWGDIHGDTCECDERD. One copy of the VI repeat lies at 276 to 326; it reads CRAVYDRYSDDFCSGHGQCNCGRCDCKAGWYGKKCEHPQSCTLSAEESIRK. The stretch at 327-367 is one VII repeat; the sequence is CQGSSDLPCSGRGKCECGKCTCYPPGDRRVYGKTCECDDRR. The stretch at 368–414 is one VIII repeat; sequence CEDLDGVVCGGHGTCSCGRCVCERGWFGKLCQHPRKCNMTEEQSKNL. An N-linked (GlcNAc...) asparagine glycan is attached at Asn405. One copy of the IX repeat lies at 415-454; that stretch reads CESADGILCSGKGSCHCGKCICSAEEWYISGEFCDCDDRD. One copy of the X repeat lies at 455–494; sequence CDKHDGLICTGNGICSCGNCECWDGWNGNACEIWLGSEYP.

As to expression, widely expressed in many tissues, but readily detectable only in aorta.

Its subcellular location is the secreted. The sequence is that of Integrin beta-like protein 1 (ITGBL1) from Homo sapiens (Human).